A 346-amino-acid polypeptide reads, in one-letter code: Leucine zipper protein 2 (346 aa).

An N-terminal signal peptide occupies residues 1–19; that stretch reads MKFSPAHYLLPLLPALVLS. Positions 16-211 form a coiled coil; it reads LVLSTRQDYE…QMKAMKETVQ (196 aa). The N-linked (GlcNAc...) asparagine glycan is linked to Asn-133. The leucine-zipper stretch occupies residues 164-192; it reads LRYGKKDLLFKAQQLTDLEQKLAVAKNEL. The interval 225–346 is disordered; it reads ALSLITSNPT…GMAAREEKIL (122 aa). Positions 250–261 are enriched in low complexity; sequence AAAKSKPQQSAS. Residues 262–283 show a composition bias toward polar residues; sequence GNNESSQVESTKEGSPSTTACD. Residue Asn-264 is glycosylated (N-linked (GlcNAc...) asparagine). A compositionally biased stretch (basic and acidic residues) spans 286–298; that stretch reads DEGRTCSIKHKES. The N-linked (GlcNAc...) asparagine glycan is linked to Asn-302.

The protein localises to the secreted. This Pongo abelii (Sumatran orangutan) protein is Leucine zipper protein 2 (LUZP2).